We begin with the raw amino-acid sequence, 76 residues long: Histone H2A (76 aa).

Positions 1–23 (MSGRGKTGGKARAKAKTRSSRAG) are disordered. N-acetylserine; in acipensins is present on S2. S2 carries the N-acetylserine; in histone H2A modification. Residue S2 is modified to Phosphoserine; in histone H2A. At K6 the chain carries N6-(2-hydroxyisobutyryl)lysine. K6 is modified (N6-acetyllysine; in histone H2A). Residues 7–19 (TGGKARAKAKTRS) are compositionally biased toward basic residues. K10 is subject to N6-(2-hydroxyisobutyryl)lysine; alternate. N6-lactoyllysine; alternate is present on K10. An N6-succinyllysine modification is found at K10. Glycyl lysine isopeptide (Lys-Gly) (interchain with G-Cter in ubiquitin); in histone H2A cross-links involve residues K14 and K16. The residue at position 37 (K37) is an N6-(2-hydroxyisobutyryl)lysine; alternate. Residues K65 and K66 each carry the N6-(2-hydroxyisobutyryl)lysine modification.

The protein belongs to the histone H2A family. As to quaternary structure, the nucleosome is a histone octamer containing two molecules each of H2A, H2B, H3 and H4 assembled in one H3-H4 heterotetramer and two H2A-H2B heterodimers. The octamer wraps approximately 147 bp of DNA. Phosphorylation on Ser-2 is enhanced during mitosis. Phosphorylation on Ser-2 directly represses transcription.

The protein localises to the nucleus. It localises to the chromosome. In terms of biological role, core component of nucleosome. Nucleosomes wrap and compact DNA into chromatin, limiting DNA accessibility to the cellular machineries which require DNA as a template. Histones thereby play a central role in transcription regulation, DNA repair, DNA replication and chromosomal stability. DNA accessibility is regulated via a complex set of post-translational modifications of histones, also called histone code, and nucleosome remodeling. Its function is as follows. Acipensins are antimicrobial peptides. Acipensins 1 and 2 have antibacterial activity against Gram-positive bacteria L.monocytogenes EGD (MIC are 1.1 uM and 1.0 uM, respectively) and S.aureus ATCC 33591 (MIC are 0.9 uM and 0.6 uM, respectively), against Gram-negative bacterium E.coli ML-35p (MIC are 0.7 uM and 0.3 uM, respectively) and antifungal activity against C.albicans 820 (MIC are 1.0 uM and 0.9 uM, respectively). Acipensin 6 has antibacterial activity against Gram-negative bacterium E.coli ML-35p (MIC=2.5 uM). Antimicrobial activity is reduced by high ionic strength. Acipensins 1, 2 and 6 have no hemolytic (up to 40 uM) or cytotoxic (up to 20 uM) effects on human cells in vitro. The sequence is that of Histone H2A from Acipenser gueldenstaedtii (Russian sturgeon).